We begin with the raw amino-acid sequence, 129 residues long: Small ribosomal subunit protein uS11 (129 aa).

The protein belongs to the universal ribosomal protein uS11 family. Part of the 30S ribosomal subunit. Interacts with proteins S7 and S18. Binds to IF-3.

Its function is as follows. Located on the platform of the 30S subunit, it bridges several disparate RNA helices of the 16S rRNA. Forms part of the Shine-Dalgarno cleft in the 70S ribosome. The sequence is that of Small ribosomal subunit protein uS11 from Limosilactobacillus fermentum (strain NBRC 3956 / LMG 18251) (Lactobacillus fermentum).